The following is a 330-amino-acid chain: 2-alkyl-3-oxoalkanoate reductase (330 aa).

The active-site Proton acceptor is the Tyr-139. Lys-143 serves as a coordination point for NADP(+).

This sequence belongs to the 3-beta-HSD family. Homodimer.

The catalysed reaction is a (2R,3S)-2-alkyl-3-hydroxyalkanoate + NADP(+) = an (R)-2-alkyl-3-oxoalkanoate + NADPH + H(+). Its function is as follows. Involved in olefin biosynthesis. Catalyzes the reversible stereospecific NADPH-dependent reduction of 2-alkyl-3-oxoalkanoic acids to 2-alkyl-3-hydroxyalkanoic acids. In the oxidative direction, syn-2-decyl-3-hydroxytetradecanoic acid is the preferred substrate. In the reductive direction, (2R/S)-2-hexyl-3-ketodecanoic acid is accepted as substrate. This chain is 2-alkyl-3-oxoalkanoate reductase, found in Stenotrophomonas maltophilia (strain K279a).